The chain runs to 99 residues: RNA-binding protein Hfq (99 aa).

The 62-residue stretch at 10–71 (DLFLNQLRKE…ISSILPSKPI (62 aa)) folds into the Sm domain. The segment at 77–99 (VQNSQVQNTASQQSNNNQNQESK) is disordered.

Belongs to the Hfq family. In terms of assembly, homohexamer.

Its function is as follows. RNA chaperone that binds small regulatory RNA (sRNAs) and mRNAs to facilitate mRNA translational regulation in response to envelope stress, environmental stress and changes in metabolite concentrations. Also binds with high specificity to tRNAs. The sequence is that of RNA-binding protein Hfq from Caldicellulosiruptor saccharolyticus (strain ATCC 43494 / DSM 8903 / Tp8T 6331).